A 497-amino-acid chain; its full sequence is MRAIFLVALALATMRESTAESLKLTKENFNETIAKSEIFLVKFYVDTCGYCQMLAPEWEKAANETIDNALMGEVDCHSQPELAANFSIRGYPTIILFRNGKEAEHYGGARTKDDIIKYIKANVGPAVTPASNAEEVTRAKEEHDVVCVGLTANNSTSLSTTLAEAAQSFRVSLKFFEAEPKLFPDEKPETIVVYRKGGEKEVYDGPMEVEKLTEFLQISRVAFGGEITPENYQYYSVIKRPVGWAMVKPNETASIELKESLTEVGKKMRSHMVVLWVNISKHPVWRDFGVPEDAKYPAFLAIHWGANYLHSTAEVVTRESLEKFILEFAAGRVEPTIKSLPVPEVETVDGKTTIVAKTMQKHLTSGKDMLILFFAPWCGHCKNFAPTFDKIAKEFDATDLIVAELDATANYVNSSTFTVTAFPTVFFVPNGGKPVVFEGERSFENVYEFVRKHVTTFKVSEKPANVTEEKKSEEENKSSKSNESNDSNESNVDKQDL.

Residues 1 to 14 (MRAIFLVALALATM) form the signal peptide. The Thioredoxin 1 domain maps to 15 to 124 (RESTAESLKL…IIKYIKANVG (110 aa)). N-linked (GlcNAc...) asparagine glycosylation is present at N30. C48 and C51 are disulfide-bonded. 6 N-linked (GlcNAc...) asparagine glycosylation sites follow: N63, N85, N153, N154, N250, and N278. In terms of domain architecture, Thioredoxin 2 spans 334-455 (EPTIKSLPVP…VYEFVRKHVT (122 aa)). Active-site nucleophile residues include C378 and C381. A disulfide bridge links C378 with C381. N-linked (GlcNAc...) asparagine glycosylation is found at N413, N465, N476, N482, N485, and N488. Positions 461 to 497 (EKPANVTEEKKSEEENKSSKSNESNDSNESNVDKQDL) are disordered. The span at 467 to 480 (TEEKKSEEENKSSK) shows a compositional bias: basic and acidic residues. Residues 481 to 490 (SNESNDSNES) show a composition bias toward low complexity.

This sequence belongs to the protein disulfide isomerase family.

The polypeptide is Bloodstream-specific protein 2 (BS2) (Trypanosoma brucei brucei).